Reading from the N-terminus, the 396-residue chain is Ribosomal RNA small subunit methyltransferase H (396 aa).

S-adenosyl-L-methionine is bound by residues 101–103 (GGH), Asp120, Tyr147, Asp171, and Gln178.

Belongs to the methyltransferase superfamily. RsmH family.

It is found in the cytoplasm. The enzyme catalyses cytidine(1402) in 16S rRNA + S-adenosyl-L-methionine = N(4)-methylcytidine(1402) in 16S rRNA + S-adenosyl-L-homocysteine + H(+). In terms of biological role, specifically methylates the N4 position of cytidine in position 1402 (C1402) of 16S rRNA. This Mycobacterium bovis (strain ATCC BAA-935 / AF2122/97) protein is Ribosomal RNA small subunit methyltransferase H.